The following is a 76-amino-acid chain: Putative snRNP Sm-like protein (76 aa).

The region spanning 4-76 is the Sm domain; that stretch reads RPLDVIHKSL…VLAISPTEEG (73 aa).

The protein belongs to the snRNP Sm proteins family.

The chain is Putative snRNP Sm-like protein from Pyrococcus furiosus (strain ATCC 43587 / DSM 3638 / JCM 8422 / Vc1).